The primary structure comprises 337 residues: uncharacterized protein (337 aa).

Topologically, residues 1–10 (MKLKINIRPN) are cytoplasmic. Residues 11 to 31 (EIIFLICIVVIFSFSYTLTYF) form a helical membrane-spanning segment. Residues 32-100 (DSPIFKEHYI…LEKLFSFSDN (69 aa)) lie on the Extracellular side of the membrane. The chain crosses the membrane as a helical span at residues 101-121 (ILIVLIIVQVIVGFLIFLLSV). The Cytoplasmic segment spans residues 122-197 (EKLSKCNYQL…KILIIKKKRD (76 aa)). Low complexity predominate over residues 148–167 (NNNNEDINNNNNNNNNNNNK). Residues 148-179 (NNNNEDINNNNNNNNNNNNKNKNDERNNEEIE) form a disordered region. A helical membrane pass occupies residues 198–218 (ILLAIIIFFLVLLGVLTIIYV). Residues 219-285 (SFIPLNIRKA…SWSLDSGLFN (67 aa)) lie on the Extracellular side of the membrane. The helical transmembrane segment at 286–306 (VKIVFFSTILIEFLTGCLILL) threads the bilayer. The Cytoplasmic portion of the chain corresponds to 307–337 (MKFKKDPNIVPLTKPSIASPTQIPHLFCIAK).

Its subcellular location is the membrane. This is an uncharacterized protein from Dictyostelium discoideum (Social amoeba).